Consider the following 541-residue polypeptide: Glucose-6-phosphate isomerase (541 aa).

The active-site Proton donor is Glu-346. Residues His-377 and Lys-506 contribute to the active site.

The protein belongs to the GPI family.

It localises to the cytoplasm. It catalyses the reaction alpha-D-glucose 6-phosphate = beta-D-fructose 6-phosphate. The protein operates within carbohydrate biosynthesis; gluconeogenesis. It functions in the pathway carbohydrate degradation; glycolysis; D-glyceraldehyde 3-phosphate and glycerone phosphate from D-glucose: step 2/4. Catalyzes the reversible isomerization of glucose-6-phosphate to fructose-6-phosphate. This chain is Glucose-6-phosphate isomerase, found in Rhizobium johnstonii (strain DSM 114642 / LMG 32736 / 3841) (Rhizobium leguminosarum bv. viciae).